Reading from the N-terminus, the 313-residue chain is Porphobilinogen deaminase (313 aa).

Position 241 is an S-(dipyrrolylmethanemethyl)cysteine (Cys-241).

Belongs to the HMBS family. In terms of assembly, monomer. The cofactor is dipyrromethane.

It carries out the reaction 4 porphobilinogen + H2O = hydroxymethylbilane + 4 NH4(+). It functions in the pathway porphyrin-containing compound metabolism; protoporphyrin-IX biosynthesis; coproporphyrinogen-III from 5-aminolevulinate: step 2/4. In terms of biological role, tetrapolymerization of the monopyrrole PBG into the hydroxymethylbilane pre-uroporphyrinogen in several discrete steps. In Sulfurimonas denitrificans (strain ATCC 33889 / DSM 1251) (Thiomicrospira denitrificans (strain ATCC 33889 / DSM 1251)), this protein is Porphobilinogen deaminase.